Here is a 199-residue protein sequence, read N- to C-terminus: V-type ATP synthase subunit E (199 aa).

It belongs to the V-ATPase E subunit family.

In terms of biological role, produces ATP from ADP in the presence of a proton gradient across the membrane. In Borrelia garinii subsp. bavariensis (strain ATCC BAA-2496 / DSM 23469 / PBi) (Borreliella bavariensis), this protein is V-type ATP synthase subunit E.